The chain runs to 212 residues: Ras-related protein Rab-2A (212 aa).

Residues glycine 16, valine 17, glycine 18, lysine 19, serine 20, cysteine 21, and threonine 38 each contribute to the GTP site. Mg(2+) is bound at residue serine 20. Positions 37–42 (LTIGVE) match the Switch 1 motif. The Mg(2+) site is built by threonine 38 and aspartate 61. Residues 63–72 (AGQESFRSIT) carry the Switch 2 motif. Residues glycine 64, asparagine 119, lysine 120, aspartate 122, alanine 150, and lysine 151 each coordinate GTP. Residues cysteine 211 and cysteine 212 are each lipidated (S-geranylgeranyl cysteine).

This sequence belongs to the small GTPase superfamily. Rab family. Interacts with PRKCI. Interacts with TRIP11. Interacts (in GTP-bound form) with GARIN1B. It depends on Mg(2+) as a cofactor. Post-translationally, prenylated. Prenylation is required for association with cellular membranes.

Its subcellular location is the endoplasmic reticulum-Golgi intermediate compartment membrane. The protein resides in the melanosome. The protein localises to the endoplasmic reticulum membrane. It localises to the golgi apparatus membrane. It is found in the cytoplasmic vesicle. Its subcellular location is the secretory vesicle. The protein resides in the acrosome. It carries out the reaction GTP + H2O = GDP + phosphate + H(+). Its activity is regulated as follows. Regulated by guanine nucleotide exchange factors (GEFs) which promote the exchange of bound GDP for free GTP, GTPase activating proteins (GAPs) which increase the GTP hydrolysis activity, and GDP dissociation inhibitors (GDIs) which inhibit the dissociation of the nucleotide from the GTPase. In terms of biological role, the small GTPases Rab are key regulators of intracellular membrane trafficking, from the formation of transport vesicles to their fusion with membranes. Rabs cycle between active GTP-bound and inactive GDP-bound states. In their active state, drive transport of vesicular carriers from donor organelles to acceptor organelles to regulate the membrane traffic that maintains organelle identity and morphology. RAB2A regulates autophagy by promoting autophagosome-lysosome fusion via recruitment of the HOPS endosomal tethering complex; this process involves autophagosomal RAB2A and lysosomal RAB39A recruitment of HOPS subcomplexes VPS39-VPS11 and VPS41-VPS16-VPS18-VPS33A, respectively, which assemble into a functional complex to mediate membrane tethering and SNAREs-driven membrane fusion. Required for protein transport from the endoplasmic reticulum to the Golgi complex. Regulates the compacted morphology of the Golgi. Together with RAB2B, redundantly required for efficient autophagic flux. The protein is Ras-related protein Rab-2A (RAB2A) of Gallus gallus (Chicken).